The primary structure comprises 96 residues: MSTLKMMLLILLLLLPLATFDSDGQAIPGGGIPSAVNSRVGRLLGGDEKSGRSLEKRCSSGKTCGSVEPVLCCARSDCYCRLIQTRSYWVPICVCP.

Residues 1–20 (MSTLKMMLLILLLLLPLATF) form the signal peptide. Residues 21–57 (DSDGQAIPGGGIPSAVNSRVGRLLGGDEKSGRSLEKR) constitute a propeptide that is removed on maturation.

Belongs to the conotoxin N superfamily. Post-translationally, contains 4 disulfide bonds. As to expression, expressed by the venom duct.

The protein resides in the secreted. This is Conotoxin Mr15.1 from Conus marmoreus (Marble cone).